The primary structure comprises 1196 residues: Contactin rig-6 (1196 aa).

The signal sequence occupies residues 1 to 19; sequence MMMLIRCISIFLLFGFVNA. N-linked (GlcNAc...) asparagine glycans are attached at residues N100 and N195. Ig-like C2-type domains are found at residues 144–225 and 232–319; these read PQIS…ARNS and PPIL…CSLS. 2 disulfide bridges follow: C169–C220 and C263–C316. N343 carries N-linked (GlcNAc...) asparagine glycosylation. Ig-like C2-type domains are found at residues 355-438, 441-533, 539-626, and 631-730; these read PQIF…VKLR, PSIL…ALLT, PVFP…VQLI, and PSIK…EFVT. Cysteines 372 and 420 form a disulfide. An N-linked (GlcNAc...) asparagine glycan is attached at N457. Intrachain disulfides connect C462/C517 and C562/C610. Residue N644 is glycosylated (N-linked (GlcNAc...) asparagine). C653 and C718 form a disulfide bridge. 4 consecutive Fibronectin type-III domains span residues 736-844, 849-961, 963-1057, and 1064-1168; these read SPIA…TAPG, TIDN…SHGE, KKVS…TKQH, and LIGK…LGSP. N-linked (GlcNAc...) asparagine glycans are attached at residues N895, N925, N945, N974, N979, N986, N1002, and N1092. A helical transmembrane segment spans residues 1174–1194; it reads TTGSSDVPIPSLLLLLLLLLW. A lipid anchor (GPI-anchor amidated serine) is attached at S1177. Residues 1178–1196 constitute a propeptide, removed in mature form; that stretch reads SDVPIPSLLLLLLLLLWRL.

This sequence belongs to the immunoglobulin superfamily. Contactin family. In terms of assembly, interacts with sax-7; the interaction establishes synaptic connections between neurons. In terms of tissue distribution, expressed in neurons including the I1 and I3 pharyngeal interneurons, NSM and VNC motor neurons, HSN and CAN neurons, the ALM and PLM touch receptor neurons and other unidentified head neurons. Expressed in AVG interneurons. Also expressed in somatic muscles, the excretory canal, the excretory cell and the hypodermis.

It localises to the cell membrane. It is found in the perikaryon. Its subcellular location is the cell projection. The protein localises to the axon. The protein resides in the synapse. It localises to the cytoplasm. Functionally, probable cell adhesion protein involved in patterning of the nervous system, playing a role in ALM and PLM touch receptor axon growth and VNC axon navigation. By associating with the transmembrane protein sax-7, mediates axonal interactions to establish synaptic connections between the AVG interneuron and the two PHC sensory neurons. Also required for non-neuronal cell migration in the excretory canal, regulating excretory canal elongation and excretory cell morphogenesis. Plays a role in regulating male mating behavior. This chain is Contactin rig-6, found in Caenorhabditis elegans.